We begin with the raw amino-acid sequence, 600 residues long: Adenine deaminase (600 aa).

This sequence belongs to the metallo-dependent hydrolases superfamily. Adenine deaminase family. Mn(2+) serves as cofactor.

The enzyme catalyses adenine + H2O + H(+) = hypoxanthine + NH4(+). The protein is Adenine deaminase of Roseobacter denitrificans (strain ATCC 33942 / OCh 114) (Erythrobacter sp. (strain OCh 114)).